The chain runs to 501 residues: Fumarate reductase 2 (501 aa).

A mitochondrion-targeting transit peptide spans M1–S32. Residue V37–N51 participates in FAD binding. Residues H281 and R304 contribute to the active site.

This sequence belongs to the FAD-dependent oxidoreductase 2 family. FRD/SDH subfamily. FAD is required as a cofactor.

It localises to the mitochondrion. It catalyses the reaction succinate + NAD(+) = fumarate + NADH + H(+). Its function is as follows. Irreversibly catalyzes the reduction of fumarate to succinate. Together with the second isozyme of soluble fumarate reductase (FRD1), essential for anaerobic growth. Involved in maintaining redox balance during oxygen deficiency conditions. Reduction of fumarate is the main source of succinate during fermentation, and under anaerobic conditions, the formation of succinate is strictly required for the reoxidation of FADH(2). In Saccharomyces cerevisiae (strain ATCC 204508 / S288c) (Baker's yeast), this protein is Fumarate reductase 2 (OSM1).